The sequence spans 212 residues: Glycerol-3-phosphate acyltransferase (212 aa).

6 consecutive transmembrane segments (helical) span residues Ile8–Val28, Ala59–Ala79, Val90–Phe110, Ile122–Ala142, Ser148–Gly168, and Val169–Phe189.

This sequence belongs to the PlsY family. As to quaternary structure, probably interacts with PlsX.

It localises to the cell inner membrane. It catalyses the reaction an acyl phosphate + sn-glycerol 3-phosphate = a 1-acyl-sn-glycero-3-phosphate + phosphate. The protein operates within lipid metabolism; phospholipid metabolism. Its function is as follows. Catalyzes the transfer of an acyl group from acyl-phosphate (acyl-PO(4)) to glycerol-3-phosphate (G3P) to form lysophosphatidic acid (LPA). This enzyme utilizes acyl-phosphate as fatty acyl donor, but not acyl-CoA or acyl-ACP. The sequence is that of Glycerol-3-phosphate acyltransferase from Bordetella petrii (strain ATCC BAA-461 / DSM 12804 / CCUG 43448).